Reading from the N-terminus, the 717-residue chain is Pre-mRNA-splicing factor ATP-dependent RNA helicase DEAH10 (717 aa).

The interval 1–29 (MPSMAQGELKSFVQNSRPNPKSPTVSPFS) is disordered. Over residues 12–29 (FVQNSRPNPKSPTVSPFS) the composition is skewed to polar residues. The Helicase ATP-binding domain maps to 51–256 (VEEVQKNDIL…FGGAKAVHVQ (206 aa)). An ATP-binding site is contributed by 64 to 71 (GETGSGKT). The short motif at 162–165 (DEAH) is the DEAH box element. One can recognise a Helicase C-terminal domain in the interval 278-453 (TLVTIFQIHF…NIILQLKALG (176 aa)).

It belongs to the DEAD box helicase family. DEAH subfamily. PRP22 sub-subfamily. Widely expressed but spatially and temporally regulated during development.

It is found in the nucleus. The protein resides in the nucleolus. It catalyses the reaction ATP + H2O = ADP + phosphate + H(+). Involved in pre-mRNA splicing. Plays a role during development in processes such as meristem maintenance, leaf morphogenesis and root morphogenesis. This chain is Pre-mRNA-splicing factor ATP-dependent RNA helicase DEAH10, found in Arabidopsis thaliana (Mouse-ear cress).